Reading from the N-terminus, the 355-residue chain is Ribosomal RNA large subunit methyltransferase M (355 aa).

S-adenosyl-L-methionine contacts are provided by residues Ser191, 224-227 (APGG), Asp243, Asp263, and Asp279. Residue Lys308 is the Proton acceptor of the active site.

This sequence belongs to the class I-like SAM-binding methyltransferase superfamily. RNA methyltransferase RlmE family. RlmM subfamily. Monomer.

It is found in the cytoplasm. The catalysed reaction is cytidine(2498) in 23S rRNA + S-adenosyl-L-methionine = 2'-O-methylcytidine(2498) in 23S rRNA + S-adenosyl-L-homocysteine + H(+). Catalyzes the 2'-O-methylation at nucleotide C2498 in 23S rRNA. This is Ribosomal RNA large subunit methyltransferase M from Stenotrophomonas maltophilia (strain R551-3).